Consider the following 120-residue polypeptide: UPF0102 protein PST_1070 (120 aa).

It belongs to the UPF0102 family.

In Stutzerimonas stutzeri (strain A1501) (Pseudomonas stutzeri), this protein is UPF0102 protein PST_1070.